Consider the following 511-residue polypeptide: Maturase K (511 aa).

It belongs to the intron maturase 2 family. MatK subfamily.

The protein resides in the plastid. Usually encoded in the trnK tRNA gene intron. Probably assists in splicing its own and other chloroplast group II introns. The sequence is that of Maturase K from Lathraea clandestina (Purple toothwort).